Here is a 358-residue protein sequence, read N- to C-terminus: Homer protein homolog 3 (358 aa).

Residues 1 to 80 are required for interaction with NFATC2; it reads MSTAREQPIF…TKTSQKFGQW (80 aa). The region spanning 1–113 is the WH1 domain; the sequence is MSTAREQPIF…EKFQEVKEAA (113 aa). The stretch at 95–122 forms a coiled coil; the sequence is SEQQLTQFAEKFQEVKEAARLAREKSQD. A phosphoserine mark is found at serine 120 and serine 158. Disordered regions lie at residues 137-168 and 239-296; these read QVPP…TERE and AEPV…QVQD. The stretch at 190–355 forms a coiled coil; that stretch reads ALQDSNQRLA…LREGLARLAE (166 aa). Residues 257-267 are compositionally biased toward basic and acidic residues; sequence LEARVQTKDQE. Residues 268–277 are compositionally biased toward polar residues; the sequence is IQTLKNQSTG. The segment covering 280 to 290 has biased composition (basic and acidic residues); the sequence is EAPDTAEREET.

The protein belongs to the Homer family. Tetramer. Encodes coiled-coil structures that mediate homo- and heteromultimerization. Interacts with NFATC2; interaction is calcium independent; interaction competes with PPP3CA for NFATC2 binding; interaction is reduced by AKT activation. Interacts with NFATC1 and NFATC4. Interacts with SHANK1; forms a high-order complex at least composed of SHANK1 and HOMER3; the complex formation is regulated by CAMK2A-mediated phosphorylation.

It is found in the cytoplasm. The protein localises to the postsynaptic density. It localises to the synapse. In terms of biological role, postsynaptic density scaffolding protein. Binds and cross-links cytoplasmic regions of GRM1, GRM5, ITPR1, DNM3, RYR1, RYR2, SHANK1 and SHANK3. By physically linking GRM1 and GRM5 with ER-associated ITPR1 receptors, it aids the coupling of surface receptors to intracellular calcium release. Negatively regulates T cell activation by inhibiting the calcineurin-NFAT pathway. Acts by competing with calcineurin/PPP3CA for NFAT protein binding, hence preventing NFAT activation by PPP3CA. This is Homer protein homolog 3 from Rattus norvegicus (Rat).